Reading from the N-terminus, the 160-residue chain is Epithelial membrane protein 1 (160 aa).

Residues 1 to 21 (MLVLLAGLFVVHIATAIMLFV) form a helical membrane-spanning segment. N-linked (GlcNAc...) asparagine glycosylation occurs at Asn-43. Transmembrane regions (helical) follow at residues 67 to 87 (FMIL…FQLF), 95 to 115 (FFLS…GVSI), and 137 to 157 (FILT…YMVL).

This sequence belongs to the PMP-22/EMP/MP20 family. In terms of tissue distribution, most prominently found in the gastrointestinal tract, skin, lung, and brain but not in liver.

The protein localises to the membrane. This is Epithelial membrane protein 1 (Emp1) from Rattus norvegicus (Rat).